We begin with the raw amino-acid sequence, 115 residues long: Peptidyl-tRNA hydrolase (115 aa).

It belongs to the PTH2 family.

The protein localises to the cytoplasm. The catalysed reaction is an N-acyl-L-alpha-aminoacyl-tRNA + H2O = an N-acyl-L-amino acid + a tRNA + H(+). Its function is as follows. The natural substrate for this enzyme may be peptidyl-tRNAs which drop off the ribosome during protein synthesis. The polypeptide is Peptidyl-tRNA hydrolase (Methanosarcina acetivorans (strain ATCC 35395 / DSM 2834 / JCM 12185 / C2A)).